Reading from the N-terminus, the 327-residue chain is MFPTIRPRRLRQTDVLRRMVRENTLTVNDLIYPLFAVPGNAIAKEVVSMPGVYQLSVDKIVDEAKEVRDLGIPAIILFGIPEDKDTDATGAWHDCGIVQKATEAVKKAVPDLVVIVDTCLCEYTNHGHCGYLETGDLTGRVLNDPTLELLKKTAVSQANAGADVIAPSGMMDGFVQAIREALDDHDFQNIPILSYAAKYASAYYGPFRDAADSSPQFGDRRTYQMDPGNSREALKEVELDLLEGADMVMVKPALSYMDIIWRIKEMTNLPVAAYNVSGEYSMVKAAALNGWIDEQKVTLETLTSFKRAGADLILTYHAKDAARWLQD.

3 residues coordinate Zn(2+): Cys119, Cys121, and Cys129. Lys198 serves as the catalytic Schiff-base intermediate with substrate. 5-aminolevulinate-binding residues include Arg208 and Arg220. Residue Glu236 participates in Mg(2+) binding. Lys251 acts as the Schiff-base intermediate with substrate in catalysis. The 5-aminolevulinate site is built by Ser277 and Tyr316.

It belongs to the ALAD family. As to quaternary structure, homooctamer. It depends on Zn(2+) as a cofactor.

It catalyses the reaction 2 5-aminolevulinate = porphobilinogen + 2 H2O + H(+). It participates in porphyrin-containing compound metabolism; protoporphyrin-IX biosynthesis; coproporphyrinogen-III from 5-aminolevulinate: step 1/4. Functionally, catalyzes an early step in the biosynthesis of tetrapyrroles. Binds two molecules of 5-aminolevulinate per subunit, each at a distinct site, and catalyzes their condensation to form porphobilinogen. The sequence is that of Delta-aminolevulinic acid dehydratase (hemB) from Synechocystis sp. (strain ATCC 27184 / PCC 6803 / Kazusa).